The chain runs to 557 residues: UvrABC system protein C (557 aa).

The region spanning 14-89 (EEPGVYIFKN…IKKYRPKYNV (76 aa)) is the GIY-YIG domain. The UVR domain maps to 194–229 (EEVFDYLKEKMETHSRMLDFENAAKYRDLLLNLSNV).

It belongs to the UvrC family. Interacts with UvrB in an incision complex.

The protein localises to the cytoplasm. The UvrABC repair system catalyzes the recognition and processing of DNA lesions. UvrC both incises the 5' and 3' sides of the lesion. The N-terminal half is responsible for the 3' incision and the C-terminal half is responsible for the 5' incision. In Thermotoga petrophila (strain ATCC BAA-488 / DSM 13995 / JCM 10881 / RKU-1), this protein is UvrABC system protein C.